The following is a 240-amino-acid chain: 3-dehydroquinate dehydratase (240 aa).

Residues serine 15, 42–44 (EWR), and arginine 73 each bind 3-dehydroquinate. Histidine 132 acts as the Proton donor/acceptor in catalysis. Lysine 160 serves as the catalytic Schiff-base intermediate with substrate. Arginine 202, serine 221, and glutamine 225 together coordinate 3-dehydroquinate.

Belongs to the type-I 3-dehydroquinase family. In terms of assembly, homodimer.

It carries out the reaction 3-dehydroquinate = 3-dehydroshikimate + H2O. It functions in the pathway metabolic intermediate biosynthesis; chorismate biosynthesis; chorismate from D-erythrose 4-phosphate and phosphoenolpyruvate: step 3/7. Functionally, involved in the third step of the chorismate pathway, which leads to the biosynthesis of aromatic amino acids. Catalyzes the cis-dehydration of 3-dehydroquinate (DHQ) and introduces the first double bond of the aromatic ring to yield 3-dehydroshikimate. The polypeptide is 3-dehydroquinate dehydratase (Latilactobacillus sakei subsp. sakei (strain 23K) (Lactobacillus sakei subsp. sakei)).